The following is a 385-amino-acid chain: 1-deoxy-D-xylulose 5-phosphate reductoisomerase (385 aa).

Residues Thr10, Gly11, Ser12, Ile13, and Asn124 each contribute to the NADPH site. Lys125 contacts 1-deoxy-D-xylulose 5-phosphate. Glu126 contacts NADPH. Residue Asp150 coordinates Mn(2+). Residues Ser151, Glu152, Ser176, and His199 each coordinate 1-deoxy-D-xylulose 5-phosphate. Glu152 serves as a coordination point for Mn(2+). Gly205 is a binding site for NADPH. 1-deoxy-D-xylulose 5-phosphate-binding residues include Ser212, Asn217, Lys218, and Glu221. Glu221 is a binding site for Mn(2+).

It belongs to the DXR family. Mg(2+) is required as a cofactor. The cofactor is Mn(2+).

The catalysed reaction is 2-C-methyl-D-erythritol 4-phosphate + NADP(+) = 1-deoxy-D-xylulose 5-phosphate + NADPH + H(+). It functions in the pathway isoprenoid biosynthesis; isopentenyl diphosphate biosynthesis via DXP pathway; isopentenyl diphosphate from 1-deoxy-D-xylulose 5-phosphate: step 1/6. Catalyzes the NADPH-dependent rearrangement and reduction of 1-deoxy-D-xylulose-5-phosphate (DXP) to 2-C-methyl-D-erythritol 4-phosphate (MEP). This chain is 1-deoxy-D-xylulose 5-phosphate reductoisomerase, found in Clostridium botulinum (strain Alaska E43 / Type E3).